The sequence spans 217 residues: Large ribosomal subunit protein uL1 (217 aa).

Residue Lys122 is modified to N6,N6-dimethyllysine; alternate. Lys122 bears the N6-methyllysine; alternate mark.

Belongs to the universal ribosomal protein uL1 family.

This is Large ribosomal subunit protein uL1 (rpl10a) from Dictyostelium discoideum (Social amoeba).